The following is a 320-amino-acid chain: Dipeptide transport system permease protein DppC (320 aa).

6 helical membrane-spanning segments follow: residues leucine 56 to phenylalanine 76, leucine 121 to valine 141, methionine 154 to methionine 176, leucine 230 to alanine 252, phenylalanine 267 to tryptophan 287, and leucine 289 to glycine 309. An ABC transmembrane type-1 domain is found at alanine 117 to glycine 307.

Belongs to the binding-protein-dependent transport system permease family. OppBC subfamily.

The protein resides in the cell membrane. Functionally, probably part of the ABC transporter DppBCDE involved in dipeptide transport. Responsible for the translocation of the substrate across the membrane. The protein is Dipeptide transport system permease protein DppC (dppC) of Bacillus subtilis (strain 168).